The chain runs to 602 residues: Carbon catabolite repressor protein 4 homolog 1 (602 aa).

The segment at 113-136 is disordered; the sequence is ASAATEGNDEEELPRLNSSGSGSG. E299 is a binding site for Mg(2+).

This sequence belongs to the CCR4/nocturin family. As to quaternary structure, component of the CCR4-NOT complex, at least composed of CRR4 and CAF1 proteins. Mg(2+) serves as cofactor.

Its subcellular location is the nucleus. The protein localises to the cytoplasm. The catalysed reaction is Exonucleolytic cleavage of poly(A) to 5'-AMP.. In terms of biological role, acts as a catalytic component of the CCR4-NOT core complex, which in the nucleus seems to be a general transcription factor, and in the cytoplasm the major mRNA deadenylase involved in mRNA turnover. The chain is Carbon catabolite repressor protein 4 homolog 1 (CCR4-1) from Arabidopsis thaliana (Mouse-ear cress).